A 294-amino-acid chain; its full sequence is tRNA dimethylallyltransferase (294 aa).

10–17 serves as a coordination point for ATP; sequence GPTAVGKT. 12–17 is a substrate binding site; sequence TAVGKT. An interaction with substrate tRNA region spans residues 35–38; that stretch reads DSQQ.

This sequence belongs to the IPP transferase family. As to quaternary structure, monomer. The cofactor is Mg(2+).

It catalyses the reaction adenosine(37) in tRNA + dimethylallyl diphosphate = N(6)-dimethylallyladenosine(37) in tRNA + diphosphate. Its function is as follows. Catalyzes the transfer of a dimethylallyl group onto the adenine at position 37 in tRNAs that read codons beginning with uridine, leading to the formation of N6-(dimethylallyl)adenosine (i(6)A). This chain is tRNA dimethylallyltransferase, found in Streptococcus mutans serotype c (strain ATCC 700610 / UA159).